Consider the following 266-residue polypeptide: RNA polymerase II subunit A C-terminal domain phosphatase ssu-72 (266 aa).

Residues 1-31 (MSAVDTPTGAASSSKPDQNEQNGQNGGREDS) are disordered. Residues 9 to 23 (GAASSSKPDQNEQNG) show a composition bias toward polar residues.

Belongs to the SSU72 phosphatase family. Component of the cleavage and polyadenylation factor (CPF) complex.

It is found in the nucleus. The catalysed reaction is O-phospho-L-seryl-[protein] + H2O = L-seryl-[protein] + phosphate. It catalyses the reaction O-phospho-L-threonyl-[protein] + H2O = L-threonyl-[protein] + phosphate. Its function is as follows. Processively dephosphorylates Ser-5 of the heptad repeats YSPTSPS in the C-terminal domain of the largest RNA polymerase II subunit (rpb-1). Functionally, component of the cleavage and polyadenylation factor (CPF) complex, which plays a key role in polyadenylation-dependent pre-mRNA 3'-end formation and cooperates with cleavage factors including the CFIA complex and NAB4/CFIB. Ssu-72 is required for 3'-end formation of snoRNAs. The sequence is that of RNA polymerase II subunit A C-terminal domain phosphatase ssu-72 (ssu-72) from Neurospora crassa (strain ATCC 24698 / 74-OR23-1A / CBS 708.71 / DSM 1257 / FGSC 987).